Here is a 238-residue protein sequence, read N- to C-terminus: Aspirochlorine biosynthesis protein N (238 aa).

Belongs to the asaB hydroxylase/desaturase family.

Its pathway is mycotoxin biosynthesis. Its function is as follows. Part of the gene cluster that mediates the biosynthesis of aspirochlorine (or antibiotic A30641), an unusual halogenated spiro compound with distinctive antifungal properties due to selective inhibition of protein biosynthesis, and which is also active against bacteria, viruses, and murine tumor cells. The non-ribosomal peptide synthetase (NRPS) aclP is responsible the formation of the diketopiperazine (DKP) core from the condensation of 2 phenylalanine residues. One Phe residue is tailored into chlorotyrosine by hydroxylation and chlorination, whereas the second Phe undergoes an unprecedented C-C bond cleavage to be converted into glycine. After formation of the DKP, sulfur is incorporated into the DKP by conjugation with glutathione by aclG, followed by its stepwise degradation to the thiol by aclI, aclJ and aclK, and the dithiol oxidation by aclT. In addition, oxygenases (aclB, aclC, aclL and aclO) and O-methyltransferases (aclM and aclU) act as tailoring enzymes to produce the intermediate dechloroaspirochlorine. Ultimately, chlorination of dechloroaspirochlorine by the halogenase aclH is the last step in the aspirochlorine pathway. The sequence is that of Aspirochlorine biosynthesis protein N from Aspergillus oryzae (strain ATCC 42149 / RIB 40) (Yellow koji mold).